A 655-amino-acid chain; its full sequence is Very long-chain specific acyl-CoA dehydrogenase, mitochondrial (655 aa).

Residues 1–40 (MQSARMTPSVGRQLLRLGARSSRSAALQGQPRPTSAQRLY) constitute a mitochondrion transit peptide. The disordered stretch occupies residues 1–70 (MQSARMTPSV…TREKPARAES (70 aa)). The span at 21 to 37 (SSRSAALQGQPRPTSAQ) shows a compositional bias: polar residues. The catalytic stretch occupies residues 41–482 (ASEATQAVLE…ALQGCMDKGK (442 aa)). At lysine 51 the chain carries N6-acetyllysine. Residues 60 to 70 (STREKPARAES) show a composition bias toward basic and acidic residues. N6-acetyllysine; alternate is present on residues lysine 71 and lysine 127. Lysine 71 and lysine 127 each carry N6-succinyllysine; alternate. At lysine 195 the chain carries N6-succinyllysine. 214 to 223 (FCLTEPSSGS) lines the FAD pocket. Cysteine 237 bears the S-nitrosocysteine mark. Position 239 is an N6-acetyllysine; alternate (lysine 239). Lysine 239 bears the N6-succinyllysine; alternate mark. Residue 249–251 (WIS) participates in FAD binding. Lysine 268 carries the post-translational modification N6-succinyllysine. An N6-acetyllysine; alternate mark is found at lysine 276 and lysine 278. N6-succinyllysine; alternate is present on residues lysine 276 and lysine 278. N6-acetyllysine occurs at positions 298 and 316. The residue at position 331 (lysine 331) is an N6-acetyllysine; alternate. N6-succinyllysine; alternate is present on lysine 331. The residue at position 372 (lysine 372) is an N6-succinyllysine. 461–463 (FEG) contributes to the substrate binding site. Glutamate 462 (proton acceptor) is an active-site residue. 464–466 (TND) lines the FAD pocket. Residue lysine 482 is modified to N6-acetyllysine; alternate. At lysine 482 the chain carries N6-succinyllysine; alternate. The membrane-anchoring stretch occupies residues 483-516 (ELTGLGNALKNPLGNVGLLIGEASKQLRRRTGIG). Phosphoserine occurs at positions 517 and 522. Residue lysine 550 is modified to N6-acetyllysine. Position 556 is an N6-acetyllysine; alternate (lysine 556). Lysine 556 carries the N6-succinyllysine; alternate modification. Residue glutamine 562 coordinates FAD. N6-succinyllysine is present on lysine 639.

It belongs to the acyl-CoA dehydrogenase family. As to quaternary structure, homodimer. Homodimerizes after import into the mitochondrion. Requires FAD as cofactor. Post-translationally, S-nitrosylation at Cys-237 in liver improves catalytic efficiency. Widely expressed (at protein level).

The protein localises to the mitochondrion inner membrane. The enzyme catalyses a very-long-chain 2,3-saturated fatty acyl-CoA + oxidized [electron-transfer flavoprotein] + H(+) = a very-long-chain (2E)-enoyl-CoA + reduced [electron-transfer flavoprotein]. It carries out the reaction dodecanoyl-CoA + oxidized [electron-transfer flavoprotein] + H(+) = (2E)-dodecenoyl-CoA + reduced [electron-transfer flavoprotein]. It catalyses the reaction tetradecanoyl-CoA + oxidized [electron-transfer flavoprotein] + H(+) = (2E)-tetradecenoyl-CoA + reduced [electron-transfer flavoprotein]. The catalysed reaction is oxidized [electron-transfer flavoprotein] + hexadecanoyl-CoA + H(+) = (2E)-hexadecenoyl-CoA + reduced [electron-transfer flavoprotein]. The enzyme catalyses octadecanoyl-CoA + oxidized [electron-transfer flavoprotein] + H(+) = (2E)-octadecenoyl-CoA + reduced [electron-transfer flavoprotein]. It carries out the reaction eicosanoyl-CoA + oxidized [electron-transfer flavoprotein] + H(+) = (2E)-eicosenoyl-CoA + reduced [electron-transfer flavoprotein]. It catalyses the reaction docosanoyl-CoA + oxidized [electron-transfer flavoprotein] + H(+) = (2E)-docosenoyl-CoA + reduced [electron-transfer flavoprotein]. The catalysed reaction is tetracosanoyl-CoA + oxidized [electron-transfer flavoprotein] + H(+) = (2E)-tetracosenoyl-CoA + reduced [electron-transfer flavoprotein]. It functions in the pathway lipid metabolism; mitochondrial fatty acid beta-oxidation. Very long-chain specific acyl-CoA dehydrogenase is one of the acyl-CoA dehydrogenases that catalyze the first step of mitochondrial fatty acid beta-oxidation, an aerobic process breaking down fatty acids into acetyl-CoA and allowing the production of energy from fats. The first step of fatty acid beta-oxidation consists in the removal of one hydrogen from C-2 and C-3 of the straight-chain fatty acyl-CoA thioester, resulting in the formation of trans-2-enoyl-CoA. Among the different mitochondrial acyl-CoA dehydrogenases, very long-chain specific acyl-CoA dehydrogenase acts specifically on acyl-CoAs with saturated 12 to 24 carbons long primary chains. In Rattus norvegicus (Rat), this protein is Very long-chain specific acyl-CoA dehydrogenase, mitochondrial.